Here is a 160-residue protein sequence, read N- to C-terminus: Ribonuclease H (160 aa).

Residues 5–146 (PGGLVEIWTD…VDQLATAARE (142 aa)) enclose the RNase H type-1 domain. Mg(2+) is bound by residues Asp14, Glu52, Asp74, and Asp138.

This sequence belongs to the RNase H family. Monomer. Mg(2+) is required as a cofactor.

It is found in the cytoplasm. The enzyme catalyses Endonucleolytic cleavage to 5'-phosphomonoester.. Functionally, endonuclease that specifically degrades the RNA of RNA-DNA hybrids. The sequence is that of Ribonuclease H from Acidiphilium cryptum (strain JF-5).